A 129-amino-acid chain; its full sequence is Glycine cleavage system H protein (129 aa).

A Lipoyl-binding domain is found at 24-106 (TYTVGITEHA…YTDGWIFKIK (83 aa)). At Lys65 the chain carries N6-lipoyllysine.

Belongs to the GcvH family. As to quaternary structure, the glycine cleavage system is composed of four proteins: P, T, L and H. The cofactor is (R)-lipoate.

Its function is as follows. The glycine cleavage system catalyzes the degradation of glycine. The H protein shuttles the methylamine group of glycine from the P protein to the T protein. The sequence is that of Glycine cleavage system H protein from Klebsiella pneumoniae subsp. pneumoniae (strain ATCC 700721 / MGH 78578).